Here is a 930-residue protein sequence, read N- to C-terminus: MSKKRLYEIAKELGKESKEVVARAKELGLDVKSHSSSVEEAVAAKIAASFKPAAAPKVEAKPAAPKVSAEKKAEKSEPAKPAVAKEEAKPAEPVAPKTEKVAAKPQSRNFKAEREARAKEQAERRKQNKGNNRDQQQNGNRQKNDGRNGGKQGQSNRDNRRFNDQAKKEQGQQKRRNERRQQEDKRSNQVAPRIDFKARAAALKAEQNAEYARSSEERFKQYQAAKEALAQANKRKEPEEIFEEAAKLAEQAQQVQAVVEVVPEKKEPAVDTRRKKQARPDKNRDDYDHEEDGPRKQQKNRSSQNQVRNQKNSNWNNNKKNKKGNNKNNRNQTPKPVTERKFHELPTEFEYTDGMTVAEIAKRIKREPAEIVKKLFMMGVMATQNQSLDGETIELLMVDYGIEAKQKVEVDNADIERFFVEDGYLNEDELVERPPVVTIMGHVDHGKTTLLDTLRNSRVATGEAGGITQHIGAYQIVENGKKITFLDTPGHAAFTSMRARGASVTDITILVVAADDGVMPQTIEAINHSKAANVPIIVAINKIDKPGANPERVIGELAEHGVMSTAWGGDSEFVEISAKFNQNIEELLETVLLVAEIQELKADPTVRAIGTVIEARLDKGKGAVATLLVQQGTLNVQDPIVVGNTFGRVRAMTNDLGRRVKVAGPSTPVSITGLNEAPMAGDHFAVYEDEKSARAAGEERAKRALMKQRQATQRVSLENLFDTLKAGELKSVNVIIKADVQGSVEALSASLQKIDVEGVKVTIVHSAVGAINESDVTLAEASNAFIVGFNVRPTPQARQQAEADDVEIRLHSIIYKVIEEMEEAMKGMLDPEFEEKVIGEAVIRETFKVSKVGTIGGFMVINGKVARDSKVRVIRDGVVIYDGELASLKHYKDDVKEVTNGREGGLMIDGYNDIKMDDVIEAYVMEEIKR.

Over residues 50–67 (FKPAAAPKVEAKPAAPKV) the composition is skewed to low complexity. Disordered regions lie at residues 50-196 (FKPA…RIDF) and 260-346 (EVVP…HELP). Composition is skewed to basic and acidic residues over residues 68–90 (SAEK…EAKP) and 110–125 (FKAE…AERR). The span at 129-141 (KGNNRDQQQNGNR) shows a compositional bias: low complexity. 2 stretches are compositionally biased toward basic and acidic residues: residues 157 to 172 (RDNR…EQGQ) and 262 to 295 (VPEK…DGPR). Residues 309–318 (NQKNSNWNNN) show a composition bias toward low complexity. The segment covering 337–346 (VTERKFHELP) has biased composition (basic and acidic residues). The region spanning 432–599 (ERPPVVTIMG…TVLLVAEIQE (168 aa)) is the tr-type G domain. Residues 441 to 448 (GHVDHGKT) form a G1 region. 441-448 (GHVDHGKT) is a binding site for GTP. A G2 region spans residues 466–470 (GITQH). The interval 487–490 (DTPG) is G3. Residues 487-491 (DTPGH) and 541-544 (NKID) each bind GTP. The G4 stretch occupies residues 541 to 544 (NKID). The G5 stretch occupies residues 577-579 (SAK).

It belongs to the TRAFAC class translation factor GTPase superfamily. Classic translation factor GTPase family. IF-2 subfamily.

It is found in the cytoplasm. Functionally, one of the essential components for the initiation of protein synthesis. Protects formylmethionyl-tRNA from spontaneous hydrolysis and promotes its binding to the 30S ribosomal subunits. Also involved in the hydrolysis of GTP during the formation of the 70S ribosomal complex. The protein is Translation initiation factor IF-2 of Streptococcus pneumoniae serotype 19F (strain G54).